The chain runs to 381 residues: Cytochrome b (381 aa).

The next 4 helical transmembrane spans lie at 34-54, 78-99, 114-134, and 179-199; these read FGSLLGLCLIIQILTGLFLAM, WLIRNIHANGASLFFICVYLHI, WNIGVILLFLLMATAFVGYVL, and FFAFHFLLPFLILALTIIHLL. H84 and H98 together coordinate heme b. Positions 183 and 197 each coordinate heme b. H202 contributes to the a ubiquinone binding site. A run of 4 helical transmembrane segments spans residues 227 to 247, 289 to 309, 321 to 341, and 348 to 368; these read YKDLLGFFVMIFFLTTLALFM, LGGVLALLFSIFILMLVPLLH, LTQIFFWLLVANSIILTWIGG, and FITVGQVASISYFSLFLIIMP.

It belongs to the cytochrome b family. The cytochrome bc1 complex contains 3 respiratory subunits (MT-CYB, CYC1 and UQCRFS1), 2 core proteins (UQCRC1 and UQCRC2) and probably 6 low-molecular weight proteins. Heme b serves as cofactor.

It localises to the mitochondrion inner membrane. Its function is as follows. Component of the ubiquinol-cytochrome c reductase complex (complex III or cytochrome b-c1 complex) that is part of the mitochondrial respiratory chain. The b-c1 complex mediates electron transfer from ubiquinol to cytochrome c. Contributes to the generation of a proton gradient across the mitochondrial membrane that is then used for ATP synthesis. The chain is Cytochrome b (mt-cyb) from Sphyrna tiburo vespertina (Pacific bonnethead shark).